A 113-amino-acid polypeptide reads, in one-letter code: Kita-kyushu lung cancer antigen 1 (113 aa).

The Cytoplasmic portion of the chain corresponds to 1–3 (MNF). Residues 4–21 (YLLLASSILCALIVFWKY) form a helical; Signal-anchor for type II membrane protein membrane-spanning segment. At 22 to 113 (RRFQRNTGEM…RGASPHRKST (92 aa)) the chain is on the extracellular side. Residue asparagine 83 is glycosylated (N-linked (GlcNAc...) asparagine).

As to expression, specifically expressed in testis. Expressed by cancer cell lines.

The protein localises to the cell membrane. The protein is Kita-kyushu lung cancer antigen 1 (CT83) of Homo sapiens (Human).